Consider the following 187-residue polypeptide: Orotate phosphoribosyltransferase (187 aa).

110 to 118 (EDVVTTGGS) serves as a coordination point for 5-phospho-alpha-D-ribose 1-diphosphate. Orotate is bound by residues Thr114 and Arg142.

The protein belongs to the purine/pyrimidine phosphoribosyltransferase family. PyrE subfamily. In terms of assembly, homodimer. The cofactor is Mg(2+).

It carries out the reaction orotidine 5'-phosphate + diphosphate = orotate + 5-phospho-alpha-D-ribose 1-diphosphate. It functions in the pathway pyrimidine metabolism; UMP biosynthesis via de novo pathway; UMP from orotate: step 1/2. Its function is as follows. Catalyzes the transfer of a ribosyl phosphate group from 5-phosphoribose 1-diphosphate to orotate, leading to the formation of orotidine monophosphate (OMP). This chain is Orotate phosphoribosyltransferase, found in Thermotoga neapolitana (strain ATCC 49049 / DSM 4359 / NBRC 107923 / NS-E).